The following is a 400-amino-acid chain: Hyaluronidase (400 aa).

Residues 1-19 (MQTILVLTTFLSAWFLAVG) form the signal peptide. 5 cysteine pairs are disulfide-bonded: Cys31/Cys319, Cys196/Cys209, Cys344/Cys355, Cys349/Cys384, and Cys386/Cys395. Glu120 serves as the catalytic Proton donor. N-linked (GlcNAc...) asparagine glycosylation is found at Asn129 and Asn166. N-linked (GlcNAc...) asparagine glycans are attached at residues Asn243 and Asn275. In terms of domain architecture, EGF-like spans 340-396 (NVARCSKQACSGRGRCTWPKDTSVIAWKFLVEKEDYDFYLGDIECKCVEGYEGRYCE).

The protein belongs to the glycosyl hydrolase 56 family. Monomer. Expressed by the venom gland.

The protein localises to the secreted. It catalyses the reaction Random hydrolysis of (1-&gt;4)-linkages between N-acetyl-beta-D-glucosamine and D-glucuronate residues in hyaluronate.. Spider venom endo-hyaluronidase that is able to degrade purified hyaluronic acid (HA) and chondroitin sulfate (CS). Has no activity on dermatan sulfate (DS) and heparan sulfate (HS). Also increases the dermonecrotic effect of the dermonecrotic toxin (AC P0CE80), when injected in rabbit skin, supporting the hypothesis that venom hyaluronidases are spreading factors. This is Hyaluronidase from Loxosceles intermedia (Brown spider).